The chain runs to 333 residues: MGDWGFLEKLLDQVQEHSTVVGKIWLTVLFIFRILILGLAGESVWGDEQSDFECNTAQPGCTNVCYDQAFPISHIRYWVLQFLFVSTPTLIYLGHVIYLSRREERLRQKEGELRALPSKDLHVERALAAIEHQMAKISVAEDGRLRIRGALMGTYVVSVLCKSVLEAGFLYGQWRLYGWTMEPVFVCQRAPCPHIVDCYVSRPTEKTIFIIFMLVVGVISLVLNLLELVHLLCRCVSREIKARRDHDARPAQGSASDPYPEQVFFYLPMGEGPSSPPCPTYNGLSSTEQNWANLTTEERLTSSRPPPFVNTAPQGGRKSPSRPNSSASKKQYV.

Topologically, residues 1–20 (MGDWGFLEKLLDQVQEHSTV) are cytoplasmic. Residues 21–40 (VGKIWLTVLFIFRILILGLA) form a helical membrane-spanning segment. The Extracellular portion of the chain corresponds to 41–76 (GESVWGDEQSDFECNTAQPGCTNVCYDQAFPISHIR). A helical transmembrane segment spans residues 77-99 (YWVLQFLFVSTPTLIYLGHVIYL). The Cytoplasmic segment spans residues 100–148 (SRREERLRQKEGELRALPSKDLHVERALAAIEHQMAKISVAEDGRLRIR). A helical transmembrane segment spans residues 149–171 (GALMGTYVVSVLCKSVLEAGFLY). Residues 172–208 (GQWRLYGWTMEPVFVCQRAPCPHIVDCYVSRPTEKTI) lie on the Extracellular side of the membrane. A helical membrane pass occupies residues 209 to 231 (FIIFMLVVGVISLVLNLLELVHL). Residues 232–333 (LCRCVSREIK…NSSASKKQYV (102 aa)) lie on the Cytoplasmic side of the membrane. A disordered region spans residues 292-333 (ANLTTEERLTSSRPPPFVNTAPQGGRKSPSRPNSSASKKQYV). Over residues 321 to 333 (SRPNSSASKKQYV) the composition is skewed to polar residues.

This sequence belongs to the connexin family. Alpha-type (group II) subfamily. As to quaternary structure, a connexon is composed of a hexamer of connexins. Highly expressed in lung.

The protein localises to the cell membrane. It localises to the cell junction. The protein resides in the gap junction. One gap junction consists of a cluster of closely packed pairs of transmembrane channels, the connexons, through which materials of low MW diffuse from one cell to a neighboring cell. In Mus musculus (Mouse), this protein is Gap junction alpha-4 protein (Gja4).